The chain runs to 74 residues: UPF0291 protein lmo0496 (74 aa).

It belongs to the UPF0291 family.

The protein resides in the cytoplasm. The protein is UPF0291 protein lmo0496 of Listeria monocytogenes serovar 1/2a (strain ATCC BAA-679 / EGD-e).